The sequence spans 117 residues: Non-specific lipid-transfer protein (117 aa).

The first 26 residues, 1-26, serve as a signal peptide directing secretion; it reads MACSAMTKLALVVALCMVVSVPIAQA. 4 disulfide bridges follow: cysteine 29–cysteine 76, cysteine 39–cysteine 53, cysteine 54–cysteine 99, and cysteine 74–cysteine 113.

The protein belongs to the plant LTP family.

Plant non-specific lipid-transfer proteins transfer phospholipids as well as galactolipids across membranes. May play a role in wax or cutin deposition in the cell walls of expanding epidermal cells and certain secretory tissues. This chain is Non-specific lipid-transfer protein, found in Prunus avium (Cherry).